A 91-amino-acid polypeptide reads, in one-letter code: MDIKLINIGFGNIVSANRIISIVSPESAPIKRIIQEARDAGMLIDATYGRRTRAVIICDSHHVILSAVQPETVAHRLSAKEASNTAEDPAD.

This sequence belongs to the RemA family.

The protein is Putative regulatory protein DSY2730 of Desulfitobacterium hafniense (strain Y51).